A 354-amino-acid chain; its full sequence is Ornithine transcarbamylase, mitochondrial (354 aa).

A mitochondrion-targeting transit peptide spans M1 to Q32. K70 bears the N6-acetyllysine; alternate mark. K70 carries the post-translational modification N6-succinyllysine; alternate. Residue K80 is modified to N6-succinyllysine. An N6-acetyllysine; alternate modification is found at K88. K88 carries the post-translational modification N6-succinyllysine; alternate. S90–R94 lines the carbamoyl phosphate pocket. A Phosphoserine modification is found at S133. R141 lines the carbamoyl phosphate pocket. An L-ornithine-binding site is contributed by R141. At K144 the chain carries N6-acetyllysine; alternate. Residue K144 is modified to N6-succinyllysine; alternate. Residue H168 coordinates carbamoyl phosphate. An L-ornithine-binding site is contributed by N199. Residues K221, K231, and K238 each carry the N6-acetyllysine; alternate modification. Residues K221, K231, and K238 each carry the N6-succinyllysine; alternate modification. N6-acetyllysine is present on K243. Position 263 to 267 (D263 to S267) interacts with L-ornithine. N6-succinyllysine occurs at positions 274 and 289. An N6-acetyllysine; alternate modification is found at K292. Residue K292 is modified to N6-succinyllysine; alternate. H302–P305 is an L-ornithine binding site. C303 is an active-site residue. Position 307 is an N6-acetyllysine; alternate (K307). K307 carries the post-translational modification N6-succinyllysine; alternate. A carbamoyl phosphate-binding site is contributed by R330. R330 provides a ligand contact to L-ornithine.

The protein belongs to the aspartate/ornithine carbamoyltransferase superfamily. OTCase family. Homotrimer. In terms of processing, acetylation at Lys-88 negatively regulates ornithine carbamoyltransferase activity in response to nutrient signals.

It localises to the mitochondrion matrix. It carries out the reaction carbamoyl phosphate + L-ornithine = L-citrulline + phosphate + H(+). The protein operates within nitrogen metabolism; urea cycle; L-citrulline from L-ornithine and carbamoyl phosphate: step 1/1. Its activity is regulated as follows. Negatively regulated by lysine acetylation. Its function is as follows. Catalyzes the second step of the urea cycle, the condensation of carbamoyl phosphate with L-ornithine to form L-citrulline. The urea cycle ensures the detoxification of ammonia by converting it to urea for excretion. The sequence is that of Ornithine transcarbamylase, mitochondrial from Mus musculus (Mouse).